We begin with the raw amino-acid sequence, 547 residues long: Chaperonin GroEL 1 (547 aa).

Residues 30–33 (TLGP), K51, 87–91 (DGTTT), G415, and D496 each bind ATP.

This sequence belongs to the chaperonin (HSP60) family. Forms a cylinder of 14 subunits composed of two heptameric rings stacked back-to-back. Interacts with the co-chaperonin GroES.

The protein resides in the cytoplasm. It carries out the reaction ATP + H2O + a folded polypeptide = ADP + phosphate + an unfolded polypeptide.. Its function is as follows. Together with its co-chaperonin GroES, plays an essential role in assisting protein folding. The GroEL-GroES system forms a nano-cage that allows encapsulation of the non-native substrate proteins and provides a physical environment optimized to promote and accelerate protein folding. The sequence is that of Chaperonin GroEL 1 from Rhodopseudomonas palustris (strain BisB5).